A 323-amino-acid chain; its full sequence is MSERTKRSVGVLGAPFSKGQARGGVEEGPIYIRRAGLIEKLEELEYEVRDYGDLHFPELPCDEPFQNVKNPRTVGQAAEKVANAVSEVKRSGRVCLTLGGDHSLAVGTITGHAKVHPDLCVVWVDAHADINTPITSPSGNLHGQPVSFLIRELQTKVPAIPGFSWVQPSLSAKDIVYIGLRDVDPGEHYILKTLGIKSYSMSDVDRLTINKVMEETIEFLVGKKKRPIHLSFDIDGLDPSVAPATGTPVPGGLTYREGMYITEQLYNTGLLSAVDMMEVNPSRGETERESKLTVNTSLNMILSCFGKAREGFHASSLRVPDLI.

Mn(2+) is bound by residues histidine 102, aspartate 125, histidine 127, and aspartate 129. Residues 127–131, 138–140, and aspartate 184 contribute to the substrate site; these read HADIN and SGN. Mn(2+) contacts are provided by aspartate 233 and aspartate 235. Substrate is bound by residues threonine 247 and glutamate 278.

The protein belongs to the arginase family. As to quaternary structure, homotrimer. The cofactor is Mn(2+).

The enzyme catalyses L-arginine + H2O = urea + L-ornithine. The protein operates within nitrogen metabolism; urea cycle; L-ornithine and urea from L-arginine: step 1/1. In Aquarana catesbeiana (American bullfrog), this protein is Arginase, hepatic.